The following is a 346-amino-acid chain: MVSSNFYKNLGPRKLTAIIDFLHDIIEPTKIHEDIDIHDIKILQEASPNDISFLSNPKYSEFLKTTKAAACIVPKDFTEESNQNTVLIHAENSYFAYSKLIDFFYAPIKSYSTKIMKSAIIADSAAIGKNCYIGHNVVIEDDVIIGDNSIIDAGTFIGRGVNIGKNARIEQHVSINYAIIGDDVVILVGAKIGQDGFGFATEKGVHNKIFHIGIVKIGNNVEIGSNTTIDRGALQDTIIEDLCRIDNLVQIGHGVKIGKGSIIVAQAGIAGSSAIGKYCALGGQVGIAGHLNIGDRTQVAAQGGVAQNIEEGKIVGGSPAVPIMDWHRQSIIMKQLVKTSNNKLKK.

H253 (proton acceptor) is an active-site residue.

This sequence belongs to the transferase hexapeptide repeat family. LpxD subfamily. Homotrimer.

It carries out the reaction a UDP-3-O-[(3R)-3-hydroxyacyl]-alpha-D-glucosamine + a (3R)-hydroxyacyl-[ACP] = a UDP-2-N,3-O-bis[(3R)-3-hydroxyacyl]-alpha-D-glucosamine + holo-[ACP] + H(+). The protein operates within bacterial outer membrane biogenesis; LPS lipid A biosynthesis. In terms of biological role, catalyzes the N-acylation of UDP-3-O-acylglucosamine using 3-hydroxyacyl-ACP as the acyl donor. Is involved in the biosynthesis of lipid A, a phosphorylated glycolipid that anchors the lipopolysaccharide to the outer membrane of the cell. This Rickettsia typhi (strain ATCC VR-144 / Wilmington) protein is UDP-3-O-acylglucosamine N-acyltransferase.